The following is a 331-amino-acid chain: Adenosine deaminase (331 aa).

Residues H12 and H14 each contribute to the Zn(2+) site. H14, D16, and G170 together coordinate substrate. H197 contacts Zn(2+). E200 acts as the Proton donor in catalysis. D278 contributes to the Zn(2+) binding site.

The protein belongs to the metallo-dependent hydrolases superfamily. Adenosine and AMP deaminases family. Adenosine deaminase subfamily. Zn(2+) serves as cofactor.

The enzyme catalyses adenosine + H2O + H(+) = inosine + NH4(+). It carries out the reaction 2'-deoxyadenosine + H2O + H(+) = 2'-deoxyinosine + NH4(+). Functionally, catalyzes the hydrolytic deamination of adenosine and 2-deoxyadenosine. The chain is Adenosine deaminase from Shewanella woodyi (strain ATCC 51908 / MS32).